Consider the following 510-residue polypeptide: tRNA-2-methylthio-N(6)-dimethylallyladenosine synthase (510 aa).

In terms of domain architecture, MTTase N-terminal spans 19-144; sequence RTYQVRTFGC…LPVLLERARH (126 aa). [4Fe-4S] cluster contacts are provided by Cys28, Cys73, Cys107, Cys181, Cys185, and Cys188. A Radical SAM core domain is found at 167–397; the sequence is RESPYAAWVS…TALQDRITYE (231 aa). The TRAM domain occupies 400-470; it reads QAQTGRTLEV…PHYLEADDVS (71 aa). Basic and acidic residues predominate over residues 482–492; sequence AWEARQARPEP. The interval 482–510 is disordered; that stretch reads AWEARQARPEPESTGPRPVGLGLPTLRRA.

This sequence belongs to the methylthiotransferase family. MiaB subfamily. Monomer. Requires [4Fe-4S] cluster as cofactor.

Its subcellular location is the cytoplasm. It catalyses the reaction N(6)-dimethylallyladenosine(37) in tRNA + (sulfur carrier)-SH + AH2 + 2 S-adenosyl-L-methionine = 2-methylsulfanyl-N(6)-dimethylallyladenosine(37) in tRNA + (sulfur carrier)-H + 5'-deoxyadenosine + L-methionine + A + S-adenosyl-L-homocysteine + 2 H(+). Catalyzes the methylthiolation of N6-(dimethylallyl)adenosine (i(6)A), leading to the formation of 2-methylthio-N6-(dimethylallyl)adenosine (ms(2)i(6)A) at position 37 in tRNAs that read codons beginning with uridine. The chain is tRNA-2-methylthio-N(6)-dimethylallyladenosine synthase from Kineococcus radiotolerans (strain ATCC BAA-149 / DSM 14245 / SRS30216).